The chain runs to 1013 residues: Sodium/potassium-transporting ATPase subunit alpha-3 (1013 aa).

The span at 1–10 (MGDKKDDKSS) shows a compositional bias: basic and acidic residues. The tract at residues 1–24 (MGDKKDDKSSPKKSKAKERRDLDD) is disordered. Topologically, residues 1-77 (MGDKKDDKSS…NALTPPPTTP (77 aa)) are cytoplasmic. Serine 37 and serine 56 each carry phosphoserine. The interval 72 to 74 (PPP) is interaction with phosphoinositide-3 kinase. A helical transmembrane segment spans residues 78–98 (EWVKFCRQLFGGFSILLWIGA). Residues 99-121 (ILCFLAYGIQAGTEDDPSGDNLY) lie on the Extracellular side of the membrane. The helical transmembrane segment at 122 to 142 (LGIVLAAVVIITGCFSYYQEA) threads the bilayer. The Cytoplasmic segment spans residues 143–278 (KSSKIMESFK…VGKTPIAIEI (136 aa)). 2 positions are modified to phosphoserine: serine 218 and serine 265. A helical membrane pass occupies residues 279–298 (EHFIQLITGVAVFLGVSFFI). Over 299–310 (LSLILGYTWLEA) the chain is Extracellular. Residues 311–328 (VIFLIGIIVANVPEGLLA) traverse the membrane as a helical segment. Over 329–762 (TVTVCLTLTA…EEGRLIFDNL (434 aa)) the chain is Cytoplasmic. Residue aspartate 366 is the 4-aspartylphosphate intermediate of the active site. The residue at position 442 (serine 442) is a Phosphoserine. Position 548 is a phosphotyrosine (tyrosine 548). Positions 707 and 711 each coordinate Mg(2+). The chain crosses the membrane as a helical span at residues 763–782 (KKSIAYTLTSNIPEITPFLL). The Extracellular portion of the chain corresponds to 783-792 (FIMANIPLPL). The chain crosses the membrane as a helical span at residues 793–813 (GTITILCIDLGTDMVPAISLA). Topologically, residues 814–833 (YEAAESDIMKRQPRNPRTDK) are cytoplasmic. Residues 834–856 (LVNERLISMAYGQIGMIQALGGF) form a helical membrane-spanning segment. The Extracellular portion of the chain corresponds to 857-908 (FSYFVILAENGFLPGNLVGIRLNWDDRTVNDLEDSYGQQWTYEQRKVVEFTC). The helical transmembrane segment at 909-928 (HTAFFVSIVVVQWADLIICK) threads the bilayer. The Cytoplasmic portion of the chain corresponds to 929–941 (TRRNSVFQQGMKN). The residue at position 933 (serine 933) is a Phosphoserine; by PKA. The helical transmembrane segment at 942 to 960 (KILIFGLFEETALAAFLSY) threads the bilayer. Topologically, residues 961–975 (CPGMDVALRMYPLKP) are extracellular. A helical transmembrane segment spans residues 976-996 (SWWFCAFPYSFLIFVYDEIRK). At 997–1013 (LILRRNPGGWVEKETYY) the chain is on the cytoplasmic side.

The protein belongs to the cation transport ATPase (P-type) (TC 3.A.3) family. Type IIC subfamily. In terms of assembly, the sodium/potassium-transporting ATPase is composed of a catalytic alpha subunit, an auxiliary non-catalytic beta subunit and an additional regulatory subunit. Interacts with regulatory subunit FXYD1.

It localises to the cell membrane. The catalysed reaction is K(+)(out) + Na(+)(in) + ATP + H2O = K(+)(in) + Na(+)(out) + ADP + phosphate + H(+). Functionally, this is the catalytic component of the active enzyme, which catalyzes the hydrolysis of ATP coupled with the exchange of sodium and potassium ions across the plasma membrane. This action creates the electrochemical gradient of sodium and potassium ions, providing the energy for active transport of various nutrients. In Mus musculus (Mouse), this protein is Sodium/potassium-transporting ATPase subunit alpha-3 (Atp1a3).